The sequence spans 245 residues: MKKKSSDFCLCNERKSQLSKFLENLSIDFSNFDLLNTALCHSSYSNELDQKSSNNERLEFLGDSVLNLIITDHLYKTYPNKSEGELSKARSYIVSEDSLSNIAREINLGSYILLGRGEESNDGRNKKGILADAIEAFVGAIYLDSGFSRATEFVVGLFDMYIRLMFNRGDFKDYKSLLQEYVQKKYKISPSYKLDKEIGPDHDKVFCVELYVGENFISNGKGKSKKEAEMRAAEVALKAMENINL.

One can recognise an RNase III domain in the interval 18 to 146 (LSKFLENLSI…FVGAIYLDSG (129 aa)). Glu59 contacts Mg(2+). Asp63 is a catalytic residue. The Mg(2+) site is built by Asp132 and Glu135. The active site involves Glu135. One can recognise a DRBM domain in the interval 173–242 (DYKSLLQEYV…AEVALKAMEN (70 aa)).

Belongs to the ribonuclease III family. Homodimer. Mg(2+) serves as cofactor.

It is found in the cytoplasm. The catalysed reaction is Endonucleolytic cleavage to 5'-phosphomonoester.. In terms of biological role, digests double-stranded RNA. Involved in the processing of primary rRNA transcript to yield the immediate precursors to the large and small rRNAs (23S and 16S). Processes some mRNAs, and tRNAs when they are encoded in the rRNA operon. Processes pre-crRNA and tracrRNA of type II CRISPR loci if present in the organism. This Borreliella burgdorferi (strain ATCC 35210 / DSM 4680 / CIP 102532 / B31) (Borrelia burgdorferi) protein is Ribonuclease 3.